The sequence spans 157 residues: 2-C-methyl-D-erythritol 2,4-cyclodiphosphate synthase (157 aa).

A divalent metal cation-binding residues include Asp-8 and His-10. Residues 8-10 (DVH) and 34-35 (HS) contribute to the 4-CDP-2-C-methyl-D-erythritol 2-phosphate site. A divalent metal cation is bound at residue His-42. 4-CDP-2-C-methyl-D-erythritol 2-phosphate contacts are provided by residues 56-58 (DIG), 61-65 (FPDTD), 100-106 (AQRPKMA), 132-135 (TTEE), and Phe-139.

This sequence belongs to the IspF family. In terms of assembly, homotrimer. It depends on a divalent metal cation as a cofactor.

The catalysed reaction is 4-CDP-2-C-methyl-D-erythritol 2-phosphate = 2-C-methyl-D-erythritol 2,4-cyclic diphosphate + CMP. The protein operates within isoprenoid biosynthesis; isopentenyl diphosphate biosynthesis via DXP pathway; isopentenyl diphosphate from 1-deoxy-D-xylulose 5-phosphate: step 4/6. Involved in the biosynthesis of isopentenyl diphosphate (IPP) and dimethylallyl diphosphate (DMAPP), two major building blocks of isoprenoid compounds. Catalyzes the conversion of 4-diphosphocytidyl-2-C-methyl-D-erythritol 2-phosphate (CDP-ME2P) to 2-C-methyl-D-erythritol 2,4-cyclodiphosphate (ME-CPP) with a corresponding release of cytidine 5-monophosphate (CMP). The protein is 2-C-methyl-D-erythritol 2,4-cyclodiphosphate synthase of Trichlorobacter lovleyi (strain ATCC BAA-1151 / DSM 17278 / SZ) (Geobacter lovleyi).